Consider the following 2151-residue polypeptide: Protein PRR14L (2151 aa).

Composition is skewed to basic and acidic residues over residues 112-123 and 134-154; these read KRSESMEPKVFR and EPSEGAKEDPHQHSTAAEEKT. Disordered stretches follow at residues 112-160, 206-225, and 314-350; these read KRSE…SQED, GTKTDNNEGHKNGNVSKDLS, and QLHGHHNEQPSSTHDSPTATSPLKENSEVSCFTSDLS. S157 is subject to Phosphoserine. A compositionally biased stretch (polar residues) spans 322 to 350; sequence QPSSTHDSPTATSPLKENSEVSCFTSDLS. S582 and S945 each carry phosphoserine. The tract at residues 974 to 1017 is disordered; sequence SNQNRPDECKSEGQSAKEMLSSDQRETVTEPHGEVNHNQKDLLV. A compositionally biased stretch (basic and acidic residues) spans 996–1013; that stretch reads DQRETVTEPHGEVNHNQK. Phosphoserine is present on S1029. Residues 1091-1103 show a composition bias toward basic and acidic residues; sequence DSRSTLSRRELDA. 4 disordered regions span residues 1091 to 1115, 1178 to 1226, 1782 to 1802, and 1986 to 2012; these read DSRSTLSRRELDAAHTGTTGQDSDF, DSHY…SCHD, TGVHSQTHTQAPPQPPAPLQD, and AACPCPQSSPPEQKEAEPEKRPKKVSQ. The span at 1178-1187 shows a compositional bias: polar residues; sequence DSHYGQQDKG. The span at 1188–1201 shows a compositional bias: basic and acidic residues; sequence TSLRETQEMTEGSR.

The sequence is that of Protein PRR14L (PRR14L) from Homo sapiens (Human).